We begin with the raw amino-acid sequence, 245 residues long: 5-oxoprolinase subunit A (245 aa).

This sequence belongs to the LamB/PxpA family. In terms of assembly, forms a complex composed of PxpA, PxpB and PxpC.

It catalyses the reaction 5-oxo-L-proline + ATP + 2 H2O = L-glutamate + ADP + phosphate + H(+). Its function is as follows. Catalyzes the cleavage of 5-oxoproline to form L-glutamate coupled to the hydrolysis of ATP to ADP and inorganic phosphate. The polypeptide is 5-oxoprolinase subunit A (Chromobacterium violaceum (strain ATCC 12472 / DSM 30191 / JCM 1249 / CCUG 213 / NBRC 12614 / NCIMB 9131 / NCTC 9757 / MK)).